A 594-amino-acid polypeptide reads, in one-letter code: UvrABC system protein C (594 aa).

The region spanning 17–94 is the GIY-YIG domain; the sequence is LEPGCYLMKD…IKQYQPRYNI (78 aa). Positions 199–234 constitute a UVR domain; it reads KTILNHLEERMNKASEQLDFEQAKEYRDMIQHIHNL.

Belongs to the UvrC family. As to quaternary structure, interacts with UvrB in an incision complex.

It localises to the cytoplasm. Functionally, the UvrABC repair system catalyzes the recognition and processing of DNA lesions. UvrC both incises the 5' and 3' sides of the lesion. The N-terminal half is responsible for the 3' incision and the C-terminal half is responsible for the 5' incision. This is UvrABC system protein C from Staphylococcus epidermidis (strain ATCC 35984 / DSM 28319 / BCRC 17069 / CCUG 31568 / BM 3577 / RP62A).